The sequence spans 125 residues: uncharacterized protein (125 aa).

The N-terminal stretch at 1–21 is a signal peptide; sequence MIRNIIITISAILLLTSKGFA. Positions 54-102 form a coiled coil; the sequence is KPEIREEIQKYRVEIVNINKKKRELYDKLSKEAQNFLAKEQEYKQRLSS. The disordered stretch occupies residues 96 to 125; the sequence is YKQRLSSSSMATEDSKDNNTAKDNKDADKK. Basic and acidic residues predominate over residues 108–125; it reads EDSKDNNTAKDNKDADKK.

This is an uncharacterized protein from Rickettsia bellii (strain RML369-C).